The primary structure comprises 468 residues: Lysosomal dipeptide transporter MFSD1 (468 aa).

The interval 1 to 25 (MEDEEEEARALLPGGSDEAGRETRA) is disordered. The Dileucine internalization motif motif lies at 11 to 12 (LL). A run of 12 helical transmembrane segments spans residues 42–62 (LAHR…SYFC), 86–106 (LLYA…GFLI), 116–136 (TIIF…GGIF), 138–158 (AFWL…SLAV), 173–194 (LNLV…NMNL), 218–238 (LMIG…LAYL), 270–290 (WLIF…IGLV), 307–327 (AINS…GLLV), 334–354 (IIWV…LAFT), 364–384 (LLGL…AFVV), 395–415 (FMQS…GMIL), and 421–441 (LFLE…VVLL).

It belongs to the major facilitator superfamily. As to quaternary structure, homodimer. Interacts with lysosomal protein GLMP (via lumenal domain); the interaction starts while both proteins are still in the endoplasmic reticulum and is required for stabilization of MFSD1 in lysosomes but has no direct effect on its targeting to lysosomes or transporter activity.

The protein localises to the lysosome membrane. The catalysed reaction is L-alpha-aminoacyl-L-arginine(out) = L-alpha-aminoacyl-L-arginine(in). The enzyme catalyses L-arginyl-L-alpha-amino acid(out) = L-arginyl-L-alpha-amino acid(in). It carries out the reaction L-arginyl-glycine(out) = L-arginyl-glycine(in). It catalyses the reaction L-alpha-aminoacyl-L-lysine(out) = L-alpha-aminoacyl-L-lysine(in). The catalysed reaction is L-aspartyl-L-lysine(out) = L-aspartyl-L-lysine(in). The enzyme catalyses L-alanyl-L-lysine(out) = L-alanyl-L-lysine(in). It carries out the reaction L-lysyl-L-alpha-amino acid(out) = L-lysyl-L-alpha-amino acid(in). It catalyses the reaction L-lysyl-L-alanine(out) = L-lysyl-L-alanine(in). The catalysed reaction is L-lysyl-L-lysine(out) = L-lysyl-L-lysine(in). The enzyme catalyses L-lysyl-glycine(out) = L-lysyl-glycine(in). It carries out the reaction L-alpha-aminoacyl-L-histidine(out) = L-alpha-aminoacyl-L-histidine(in). It catalyses the reaction L-histidyl-L-alpha-amino acid(out) = L-histidyl-L-alpha-amino acid(in). The catalysed reaction is L-histidyl-glycine(out) = L-histidyl-glycine(in). Functionally, lysosomal dipeptide uniporter that selectively exports lysine, arginine or histidine-containing dipeptides with a net positive charge from the lysosome lumen into the cytosol. Could play a role in a specific type of protein O-glycosylation indirectly regulating macrophages migration and tissue invasion. Also essential for liver homeostasis. This chain is Lysosomal dipeptide transporter MFSD1, found in Bos taurus (Bovine).